We begin with the raw amino-acid sequence, 120 residues long: NAD(P)H-quinone oxidoreductase subunit 3 (120 aa).

Helical transmembrane passes span 6–26, 64–84, and 89–109; these read GYDA…LALV, MFAL…PWAV, and LGLL…VALA.

This sequence belongs to the complex I subunit 3 family. In terms of assembly, NDH-1 can be composed of about 15 different subunits; different subcomplexes with different compositions have been identified which probably have different functions.

Its subcellular location is the cellular thylakoid membrane. The catalysed reaction is a plastoquinone + NADH + (n+1) H(+)(in) = a plastoquinol + NAD(+) + n H(+)(out). The enzyme catalyses a plastoquinone + NADPH + (n+1) H(+)(in) = a plastoquinol + NADP(+) + n H(+)(out). NDH-1 shuttles electrons from an unknown electron donor, via FMN and iron-sulfur (Fe-S) centers, to quinones in the respiratory and/or the photosynthetic chain. The immediate electron acceptor for the enzyme in this species is believed to be plastoquinone. Couples the redox reaction to proton translocation, and thus conserves the redox energy in a proton gradient. Cyanobacterial NDH-1 also plays a role in inorganic carbon-concentration. The chain is NAD(P)H-quinone oxidoreductase subunit 3 from Prochlorococcus marinus (strain MIT 9211).